A 435-amino-acid chain; its full sequence is Virulence factor PIT1 (435 aa).

The next 5 helical transmembrane spans lie at 33-53 (ETTT…SEVI), 77-97 (IFFI…ILVT), 111-131 (WAWT…CVIG), 143-163 (VASW…MWTN), and 204-224 (TFWF…ACCI). Asn330 carries an N-linked (GlcNAc...) asparagine glycan. Over residues 392–404 (SPQMPSKAQSQSI) the composition is skewed to polar residues. Positions 392–435 (SPQMPSKAQSQSIPYKREVEVTVDMSPVPPPPGPSPAPLPAPYM) are disordered. Positions 418-435 (PVPPPPGPSPAPLPAPYM) are enriched in pro residues.

Post-translationally, O-mannosylated by PMT4. Is also N-glycosylated.

It is found in the cell membrane. In terms of biological role, plasma membrane virulence factor required for spreading and inducing tumors in infected leaves. The chain is Virulence factor PIT1 from Mycosarcoma maydis (Corn smut fungus).